We begin with the raw amino-acid sequence, 1070 residues long: Envelopment polyprotein (1070 aa).

Positions Met1 to Cys17 are cleaved as a signal peptide. Residues Glu18–Lys457 lie on the Lumenal side of the membrane. Cystine bridges form between Cys22-Cys55, Cys152-Cys165, Cys211-Cys221, Cys267-Cys309, Cys296-Cys301, Cys353-Cys356, Cys360-Cys429, and Cys380-Cys385. Asn269 is a glycosylation site (N-linked (GlcNAc...) asparagine; by host). A helical membrane pass occupies residues Trp458 to Ile478. Residues Met479–Ser536 lie on the Cytoplasmic side of the membrane. The tract at residues Arg480–Leu522 is golgi retention signal. The internal signal sequence for glycoprotein C stretch occupies residues Lys541–Cys560. Positions Val550–Cys560 are excised as a propeptide. Topologically, residues Val550–Ser1023 are lumenal. Cystine bridges form between Cys561-Cys602, Cys574-Cys584, Cys642-Cys831, Cys648-Cys696, Cys654-Cys703, Cys659-Cys685, Cys689-Cys694, Cys799-Cys813, Cys896-Cys966, and Cys906-Cys909. The fusion loop stretch occupies residues Cys648 to Cys654. Residues Gly690–Pro701 form a fusion loop region. Residues Leu1024–Ile1044 traverse the membrane as a helical segment. Topologically, residues Leu1045–Ser1070 are cytoplasmic.

The protein belongs to the phlebovirus envelope glycoprotein family. As to quaternary structure, heterodimer with glycoprotein C. In terms of assembly, heterodimer with glycoprotein N. Homotrimer (postfusion). Specific enzymatic cleavages in vivo yield mature proteins Glycoprotein C, and Glycoprotein N. In terms of processing, glycosylated. Post-translationally, palmitoylated.

Its subcellular location is the virion membrane. It is found in the host Golgi apparatus membrane. The protein localises to the host endoplasmic reticulum membrane. Functionally, structural component of the virion that interacts with glycoprotein C. It shields the hydrophobic fusion loops of the glycoprotein C, preventing premature fusion. The glycoprotein protrusions are arranged on an icosahedral lattice, with T=12 triangulation. They are able to attach the virion to the host cell receptor CD209/DC-SIGN and to promote fusion of membranes with the late endosome after endocytosis of the virion. Plays a role in the packaging of ribonucleoproteins during virus assembly. Its function is as follows. Structural component of the virion that interacts with glycoprotein N. Acts as a class II fusion protein that is activated upon acidification and subsequent repositioning of the glycoprotein N. The glycoprotein protrusions are arranged on an icosahedral lattice, with T=12 triangulation. They are able to attach the virion to the host cell receptor CD209/DC-SIGN and to promote fusion of membranes with the late endosome after endocytosis of the virion. This Amblyomma variegatum (Tropical bont tick) protein is Envelopment polyprotein (GP).